A 607-amino-acid polypeptide reads, in one-letter code: MLLKELSSLASPLSQSQVDKLKQLTAELNSVQLAWVSGYLAATANTSGSAIQVAASVTEAQAAQTVTILYGSQTGNGRGIAKALAEKAKTQGYSVNLASMGEYNVRQLKQETLLLLVVSTHGEGEAPDDAIELHKFLATKRAPQLNNLHYSVLALGDSSYEFFCQTGKDFDARLSALGAKALLPLVECDVDYEAAAGQWHADVLTAVKPLIQTTANVVALNEINSTSAQVASESEFTKQNPYRAEVLVSQKITGRDSDRDVRHVEIDLGESGLHYEVGDALGVWFSNSEILVGEILAGLGLAADAKVTVGSESISLKQALIDKKELTQLYPGLVKAWAELSASSELLALSEDKEQLRQFILNHQFVDLVTNYKLPAEANLDANKLLELLRPLTPRLYSIASSQTEVDTEVHLTVALVEDEHQGQTRFGGASHFLASAQEGAEVKVYVEPNKHFRLPENPDTPVIMIGPGTGVAPFRAFMQERVAQGAKGDSWLFFGNPHFEQDFLYQTEWQQYLKNGDLTRIDVAFSRDQAHKIYVQHRIKEQGQALWQWLQNGAHLYICGDAERMAKDVHQALLAVAVEFGGLSSEAAEEYFETLRSHKRYQKDVY.

A Flavodoxin-like domain is found at 66-204 (VTILYGSQTG…AAGQWHADVL (139 aa)). FMN is bound by residues 72 to 77 (SQTGNG), 119 to 122 (STHG), and 155 to 164 (LGDSSYEFFC). The region spanning 239-456 (QNPYRAEVLV…VEPNKHFRLP (218 aa)) is the FAD-binding FR-type domain. FAD-binding positions include T327, L361, 395–398 (RLYS), 413–415 (TVA), and 428–431 (GGAS). Residues 527–528 (SR), 533–537 (KIYVQ), and D569 each bind NADP(+). Y607 contacts FAD.

The protein belongs to the NADPH-dependent sulphite reductase flavoprotein subunit CysJ family. It in the N-terminal section; belongs to the flavodoxin family. In the C-terminal section; belongs to the flavoprotein pyridine nucleotide cytochrome reductase family. In terms of assembly, alpha(8)-beta(8). The alpha component is a flavoprotein, the beta component is a hemoprotein. FAD serves as cofactor. It depends on FMN as a cofactor.

The enzyme catalyses hydrogen sulfide + 3 NADP(+) + 3 H2O = sulfite + 3 NADPH + 4 H(+). The protein operates within sulfur metabolism; hydrogen sulfide biosynthesis; hydrogen sulfide from sulfite (NADPH route): step 1/1. Its function is as follows. Component of the sulfite reductase complex that catalyzes the 6-electron reduction of sulfite to sulfide. This is one of several activities required for the biosynthesis of L-cysteine from sulfate. The flavoprotein component catalyzes the electron flow from NADPH -&gt; FAD -&gt; FMN to the hemoprotein component. This is Sulfite reductase [NADPH] flavoprotein alpha-component from Shewanella oneidensis (strain ATCC 700550 / JCM 31522 / CIP 106686 / LMG 19005 / NCIMB 14063 / MR-1).